A 166-amino-acid polypeptide reads, in one-letter code: uncharacterized protein (166 aa).

This is an uncharacterized protein from Schizosaccharomyces pombe (strain 972 / ATCC 24843) (Fission yeast).